Reading from the N-terminus, the 172-residue chain is Propanediol dehydratase small subunit (172 aa).

The protein belongs to the diol/glycerol dehydratase small subunit family. In terms of assembly, the propanediol dehydratase enzyme is a heterotrimeric complex composed of a large (PduC), a medium (PduD) and a small (PduE) subunit. It depends on adenosylcob(III)alamin as a cofactor.

It localises to the bacterial microcompartment. The enzyme catalyses propane-1,2-diol = propanal + H2O. The protein operates within polyol metabolism; 1,2-propanediol degradation. Functionally, part of the PduCDE complex that catalyzes the dehydration of 1,2-propanediol (1,2-PD) to propionaldehyde. Localized in the bacterial microcompartment (BMC) dedicated to 1,2-PD degradation. Its function is as follows. Expression of a cosmid containing the full 21-gene pdu operon in E.coli allows E.coli to grow on 1,2-propanediol (1,2-PD) with the appearance of BMCs in its cytoplasm. The 1,2-PD-specific bacterial microcompartment (BMC) concentrates low levels of 1,2-PD catabolic enzymes, concentrates volatile reaction intermediates thus enhancing pathway flux and keeps the level of toxic, mutagenic propionaldehyde low. This is Propanediol dehydratase small subunit from Citrobacter freundii.